A 112-amino-acid polypeptide reads, in one-letter code: MGVTKELKSPGNGVDFPKKGDFVTIHYTGRLTDGSKFDSSVDRNEPFQTQIGTGRVIKGWDEGVPQMSLGEKAVLTITPDYGYGARGFPPVIPGNSTLIFEVELLGINNKRA.

The PPIase FKBP-type domain maps to 20-108; that stretch reads GDFVTIHYTG…IFEVELLGIN (89 aa).

This sequence belongs to the FKBP-type PPIase family. FKBP1 subfamily.

It localises to the cytoplasm. The enzyme catalyses [protein]-peptidylproline (omega=180) = [protein]-peptidylproline (omega=0). Its activity is regulated as follows. Inhibited by both FK506 and rapamycin. In terms of biological role, PPIases accelerate the folding of proteins. It catalyzes the cis-trans isomerization of proline imidic peptide bonds in oligopeptides. This is FK506-binding protein 1A (fpr1A) from Aspergillus fumigatus (strain ATCC MYA-4609 / CBS 101355 / FGSC A1100 / Af293) (Neosartorya fumigata).